The sequence spans 78 residues: Large ribosomal subunit protein bL28 (78 aa).

The disordered stretch occupies residues 1–21; sequence MSRVCQVTGKRPVSGNNRSHA.

The protein belongs to the bacterial ribosomal protein bL28 family.

In Sodalis glossinidius (strain morsitans), this protein is Large ribosomal subunit protein bL28.